The following is a 77-amino-acid chain: Acyl carrier protein (77 aa).

The Carrier domain maps to 1–76 (MAVFDEVKDV…DVVNYIDGLK (76 aa)). Ser36 carries the post-translational modification O-(pantetheine 4'-phosphoryl)serine.

Belongs to the acyl carrier protein (ACP) family. In terms of processing, 4'-phosphopantetheine is transferred from CoA to a specific serine of apo-ACP by AcpS. This modification is essential for activity because fatty acids are bound in thioester linkage to the sulfhydryl of the prosthetic group.

Its subcellular location is the cytoplasm. It functions in the pathway lipid metabolism; fatty acid biosynthesis. In terms of biological role, carrier of the growing fatty acid chain in fatty acid biosynthesis. The sequence is that of Acyl carrier protein from Campylobacter fetus subsp. fetus (strain 82-40).